Consider the following 478-residue polypeptide: Nitrogenase molybdenum-iron protein alpha chain (478 aa).

[8Fe-7S] cluster is bound by residues cysteine 46, cysteine 72, and cysteine 134. Cysteine 260 and histidine 430 together coordinate [7Fe-Mo-9S-C-homocitryl] cluster.

The protein belongs to the NifD/NifK/NifE/NifN family. As to quaternary structure, tetramer of two alpha and two beta chains. Forms complex with the iron protein (nitrogenase component 2). Requires [8Fe-7S] cluster as cofactor. It depends on [7Fe-Mo-9S-C-homocitryl] cluster as a cofactor.

It carries out the reaction N2 + 8 reduced [2Fe-2S]-[ferredoxin] + 16 ATP + 16 H2O = H2 + 8 oxidized [2Fe-2S]-[ferredoxin] + 2 NH4(+) + 16 ADP + 16 phosphate + 6 H(+). Functionally, this molybdenum-iron protein is part of the nitrogenase complex that catalyzes the key enzymatic reactions in nitrogen fixation. The sequence is that of Nitrogenase molybdenum-iron protein alpha chain (nifD) from Methanothermococcus thermolithotrophicus (Methanococcus thermolithotrophicus).